The primary structure comprises 234 residues: MAKLTKRMRNIREKVEVTKEYDINEAVALLKELATAKFTESVDVAVNLGIDARKSDQNVRGATVLPHGTGREIRVAVFTQGANAEAAKEAGADLVGMEDLAELVKKGEMNFDVVVASPDAMRVVGQLGTILGPRGLMPNPKVGTVTPNVAEAVKNAKAGQVRYRNDKNGIIHTTIGKVDFDAAQLKENLEALLVALKKAKPTSAKGTFVKKVSISTTMGAGVSLDQATLNTQTN.

Belongs to the universal ribosomal protein uL1 family. In terms of assembly, part of the 50S ribosomal subunit.

Binds directly to 23S rRNA. The L1 stalk is quite mobile in the ribosome, and is involved in E site tRNA release. In terms of biological role, protein L1 is also a translational repressor protein, it controls the translation of the L11 operon by binding to its mRNA. This chain is Large ribosomal subunit protein uL1, found in Aliivibrio fischeri (strain ATCC 700601 / ES114) (Vibrio fischeri).